Consider the following 167-residue polypeptide: Small ribosomal subunit protein uS5 (167 aa).

The S5 DRBM domain occupies L12–V75.

It belongs to the universal ribosomal protein uS5 family. Part of the 30S ribosomal subunit. Contacts proteins S4 and S8.

With S4 and S12 plays an important role in translational accuracy. Its function is as follows. Located at the back of the 30S subunit body where it stabilizes the conformation of the head with respect to the body. This chain is Small ribosomal subunit protein uS5, found in Hahella chejuensis (strain KCTC 2396).